A 63-amino-acid polypeptide reads, in one-letter code: Serine protease inhibitor 3 (63 aa).

A signal peptide spans 1–23; sequence MAKLLAVFLVLLIAALVCEQALA. 3 disulfides stabilise this stretch: C24-C39, C34-C52, and C37-C47. The Pacifastin domain occupies 24–55; that stretch reads CTPGSRKYDGCNWCTCSSGGAWICTLKYCPPS.

Belongs to the protease inhibitor I19 family. Expressed in hemolymph, ovaries, testes and fat body of adults but are absent in the gut. Also present in larval hemolymph and fat body.

Its subcellular location is the secreted. In terms of biological role, in vitro, active against alpha-chymotrypsin. The protein is Serine protease inhibitor 3 of Schistocerca gregaria (Desert locust).